A 184-amino-acid polypeptide reads, in one-letter code: Protein GrpE (184 aa).

The span at 1 to 17 (MQHEDKTPEQQENKTPE) shows a compositional bias: basic and acidic residues. The tract at residues 1-39 (MQHEDKTPEQQENKTPETELQQENAPATPQEAGAAGSID) is disordered. A compositionally biased stretch (polar residues) spans 18–27 (TELQQENAPA).

The protein belongs to the GrpE family. As to quaternary structure, homodimer.

It localises to the cytoplasm. In terms of biological role, participates actively in the response to hyperosmotic and heat shock by preventing the aggregation of stress-denatured proteins, in association with DnaK and GrpE. It is the nucleotide exchange factor for DnaK and may function as a thermosensor. Unfolded proteins bind initially to DnaJ; upon interaction with the DnaJ-bound protein, DnaK hydrolyzes its bound ATP, resulting in the formation of a stable complex. GrpE releases ADP from DnaK; ATP binding to DnaK triggers the release of the substrate protein, thus completing the reaction cycle. Several rounds of ATP-dependent interactions between DnaJ, DnaK and GrpE are required for fully efficient folding. This chain is Protein GrpE, found in Methylobacillus flagellatus (strain ATCC 51484 / DSM 6875 / VKM B-1610 / KT).